Here is a 352-residue protein sequence, read N- to C-terminus: Phenylalanine--tRNA ligase alpha subunit (352 aa).

A Mg(2+)-binding site is contributed by Glu258.

It belongs to the class-II aminoacyl-tRNA synthetase family. Phe-tRNA synthetase alpha subunit type 1 subfamily. Tetramer of two alpha and two beta subunits. It depends on Mg(2+) as a cofactor.

The protein resides in the cytoplasm. The catalysed reaction is tRNA(Phe) + L-phenylalanine + ATP = L-phenylalanyl-tRNA(Phe) + AMP + diphosphate + H(+). In Staphylococcus aureus (strain Mu3 / ATCC 700698), this protein is Phenylalanine--tRNA ligase alpha subunit.